A 105-amino-acid chain; its full sequence is Large ribosomal subunit protein uL22 (105 aa).

This sequence belongs to the universal ribosomal protein uL22 family. In terms of assembly, part of the 50S ribosomal subunit.

This protein binds specifically to 23S rRNA; its binding is stimulated by other ribosomal proteins, e.g. L4, L17, and L20. It is important during the early stages of 50S assembly. It makes multiple contacts with different domains of the 23S rRNA in the assembled 50S subunit and ribosome. Functionally, the globular domain of the protein is located near the polypeptide exit tunnel on the outside of the subunit, while an extended beta-hairpin is found that lines the wall of the exit tunnel in the center of the 70S ribosome. The chain is Large ribosomal subunit protein uL22 from Sulfurimonas denitrificans (strain ATCC 33889 / DSM 1251) (Thiomicrospira denitrificans (strain ATCC 33889 / DSM 1251)).